The following is a 488-amino-acid chain: Glutamyl-tRNA(Gln) amidotransferase subunit A (488 aa).

Residues lysine 77 and serine 152 each act as charge relay system in the active site. The active-site Acyl-ester intermediate is serine 176.

It belongs to the amidase family. GatA subfamily. In terms of assembly, heterotrimer of A, B and C subunits.

It catalyses the reaction L-glutamyl-tRNA(Gln) + L-glutamine + ATP + H2O = L-glutaminyl-tRNA(Gln) + L-glutamate + ADP + phosphate + H(+). Functionally, allows the formation of correctly charged Gln-tRNA(Gln) through the transamidation of misacylated Glu-tRNA(Gln) in organisms which lack glutaminyl-tRNA synthetase. The reaction takes place in the presence of glutamine and ATP through an activated gamma-phospho-Glu-tRNA(Gln). The polypeptide is Glutamyl-tRNA(Gln) amidotransferase subunit A (Streptococcus pneumoniae (strain 70585)).